A 283-amino-acid polypeptide reads, in one-letter code: Thymidylate synthase (283 aa).

R22 lines the dUMP pocket. C160 (nucleophile) is an active-site residue. DUMP-binding positions include 180 to 183, N191, and 221 to 223; these read RSCD and HIY. D183 is a (6R)-5,10-methylene-5,6,7,8-tetrahydrofolate binding site. A (6R)-5,10-methylene-5,6,7,8-tetrahydrofolate-binding site is contributed by A282.

Belongs to the thymidylate synthase family. Bacterial-type ThyA subfamily. As to quaternary structure, homodimer.

It localises to the cytoplasm. It catalyses the reaction dUMP + (6R)-5,10-methylene-5,6,7,8-tetrahydrofolate = 7,8-dihydrofolate + dTMP. It functions in the pathway pyrimidine metabolism; dTTP biosynthesis. Catalyzes the reductive methylation of 2'-deoxyuridine-5'-monophosphate (dUMP) to 2'-deoxythymidine-5'-monophosphate (dTMP) while utilizing 5,10-methylenetetrahydrofolate (mTHF) as the methyl donor and reductant in the reaction, yielding dihydrofolate (DHF) as a by-product. This enzymatic reaction provides an intracellular de novo source of dTMP, an essential precursor for DNA biosynthesis. This is Thymidylate synthase from Shewanella frigidimarina (strain NCIMB 400).